The sequence spans 430 residues: tRNA(Ile)-lysidine synthase (430 aa).

ATP is bound at residue 21–26; the sequence is SGGLDS.

It belongs to the tRNA(Ile)-lysidine synthase family.

The protein resides in the cytoplasm. It carries out the reaction cytidine(34) in tRNA(Ile2) + L-lysine + ATP = lysidine(34) in tRNA(Ile2) + AMP + diphosphate + H(+). Functionally, ligates lysine onto the cytidine present at position 34 of the AUA codon-specific tRNA(Ile) that contains the anticodon CAU, in an ATP-dependent manner. Cytidine is converted to lysidine, thus changing the amino acid specificity of the tRNA from methionine to isoleucine. The sequence is that of tRNA(Ile)-lysidine synthase from Salmonella paratyphi B (strain ATCC BAA-1250 / SPB7).